Here is a 129-residue protein sequence, read N- to C-terminus: GM1b/asialo-GM1 oligosaccharide-binding R-type lectin (129 aa).

A carbohydrate is bound by residues 21-23 (FYN), 26-28 (RKD), F32, and 37-40 (YDDQ).

As to quaternary structure, homodimer. As to expression, highest expression in the outer part of the mantle rim. Highly expressed in gills, with a much lower expression in the digestive gland and posterior adductor muscle. Scarcely detectable in foot.

Its activity is regulated as follows. Hemagglutination activity requires divalent cations such as Ca(2+). Hemagglutination activity is weakly inhibited by monosaccharides such as D-Gal (25 mM), D-GalNAc (25 mM) and D-Fuc (25 mM) and by disaccharides such as melibiose (25 mM) and lactose (25 mM). Hemagglutination activity is inhibited by bovine submaxillary mucin, but not by porcine stomach mucin or fetuin. Galbeta1-3GalNAcbeta1-4Galbeta1-4Glc oligosaccharide-binding lectin. Binds strongly to the oligosaccharides of ganglioside GM1b and to a lesser extent its precursor asialo-GM1. Binds weakly to asialo-GM2 oligosaccharide and to the glycan moiety of globo-series stage-specific embryonal antigen 4 (SSEA-4) hexaose. Binds galactose, N-acetylgalactose and lactose. Does not bind GM1. Does not bind to Gal-beta1,3-GalNAc (Thomsen-Friedenreich antigen), the oligosaccharide of GM1a ganglioside or SSEA-4 tetraose. Does not bind to N-glycans, O-glycans or glycosaminoglycans of glycoproteins. Does not bind Lewis glycans, derivatives of lactose or N-acetyllactosamine or blood group (ABH-type) oligosaccharides. Does not bind glucose. Has hemagglutination activity towards rabbit erythrocytes. Displays cytotoxic effects against various cultured cell lines including human breast (MCF-7), cervical (HeLa) and colon cancer (Caco2) cell lines, as well as dog kidney (MDCK) cell line that express asialo-GM1 oligosaccharide at their cell surface. Shows dose- and time-dependent activation of MKK3/6, ERK1/2 and p38 MAPK, as well as caspase-3/9 in HeLa cervical cancer cells. No cytotoxic effect on BT474 human breast cancer cell line. May be involved in recognition of glycans found on parasitic or symbiotic microorganisms. The sequence is that of GM1b/asialo-GM1 oligosaccharide-binding R-type lectin from Mytilisepta virgata (Purplish bifurcate mussel).